The following is a 165-amino-acid chain: Plastocyanin, chloroplastic (165 aa).

The transit peptide at 1-66 (MATVTSSAAV…AGILAGNAMA (66 aa)) directs the protein to the chloroplast. The Plastocyanin-like domain maps to 67–165 (AEVLLGSSDG…AGMVGKVTVN (99 aa)). Cu cation contacts are provided by H103, C150, H153, and M158.

It belongs to the plastocyanin family. The cofactor is Cu(2+).

The protein resides in the plastid. Its subcellular location is the chloroplast thylakoid membrane. Its function is as follows. Participates in electron transfer between P700 and the cytochrome b6-f complex in photosystem I. This Silene latifolia subsp. alba (White campion) protein is Plastocyanin, chloroplastic (PETE).